Reading from the N-terminus, the 438-residue chain is Cobyrinate a,c-diamide synthase (438 aa).

In terms of domain architecture, GATase cobBQ-type spans 242 to 426; it reads TIAIARDAAF…FHAYFSSCPA (185 aa). Cys-325 serves as the catalytic Nucleophile.

It belongs to the CobB/CbiA family. The cofactor is Mg(2+).

The catalysed reaction is cob(II)yrinate + 2 L-glutamine + 2 ATP + 2 H2O = cob(II)yrinate a,c diamide + 2 L-glutamate + 2 ADP + 2 phosphate + 2 H(+). It participates in cofactor biosynthesis; adenosylcobalamin biosynthesis; cob(II)yrinate a,c-diamide from sirohydrochlorin (anaerobic route): step 10/10. Functionally, catalyzes the ATP-dependent amidation of the two carboxylate groups at positions a and c of cobyrinate, using either L-glutamine or ammonia as the nitrogen source. This is Cobyrinate a,c-diamide synthase from Herminiimonas arsenicoxydans.